Here is a 144-residue protein sequence, read N- to C-terminus: Small ribosomal subunit protein uS11 (144 aa).

A disordered region spans residues 123-144 (EDVTPVPTDSTRRKGSRRGRRL). Over residues 135–144 (RKGSRRGRRL) the composition is skewed to basic residues.

This sequence belongs to the universal ribosomal protein uS11 family.

The sequence is that of Small ribosomal subunit protein uS11 (RPS14) from Trypanosoma brucei brucei.